The following is a 598-amino-acid chain: Aspartate--tRNA ligase (598 aa).

Glu-182 serves as a coordination point for L-aspartate. An aspartate region spans residues Gln-206–Lys-209. Position 228 (Arg-228) interacts with L-aspartate. ATP-binding positions include Arg-228–Glu-230 and Gln-237. Residue His-456 participates in L-aspartate binding. Glu-490 is a binding site for ATP. Position 497 (Arg-497) interacts with L-aspartate. Gly-542–Arg-545 contacts ATP.

It belongs to the class-II aminoacyl-tRNA synthetase family. Type 1 subfamily. As to quaternary structure, homodimer.

The protein resides in the cytoplasm. The enzyme catalyses tRNA(Asp) + L-aspartate + ATP = L-aspartyl-tRNA(Asp) + AMP + diphosphate. Functionally, catalyzes the attachment of L-aspartate to tRNA(Asp) in a two-step reaction: L-aspartate is first activated by ATP to form Asp-AMP and then transferred to the acceptor end of tRNA(Asp). The polypeptide is Aspartate--tRNA ligase (Agathobacter rectalis (strain ATCC 33656 / DSM 3377 / JCM 17463 / KCTC 5835 / VPI 0990) (Eubacterium rectale)).